The following is a 147-amino-acid chain: Austinoid biosynthesis clusters protein H (147 aa).

It belongs to the trt14 isomerase family. As to quaternary structure, homodimer.

Its pathway is secondary metabolite biosynthesis; terpenoid biosynthesis. Part of the gene cluster B that mediates the biosynthesis of the fungal meroterpenoid acetoxydehydroaustin. The first step of the pathway is the synthesis of 3,5-dimethylorsellinic acid by the polyketide synthase ausA. 3,5-dimethylorsellinic acid is then prenylated by the polyprenyl transferase ausN. Further epoxidation by the FAD-dependent monooxygenase ausM and cyclization by the probable terpene cyclase ausL lead to the formation of protoaustinoid A. Protoaustinoid A is then oxidized to spiro-lactone preaustinoid A3 by the combined action of the FAD-binding monooxygenases ausB and ausC, and the dioxygenase ausE. Acid-catalyzed keto-rearrangement and ring contraction of the tetraketide portion of preaustinoid A3 by ausJ lead to the formation of preaustinoid A4. The aldo-keto reductase ausK, with the help of ausH, is involved in the next step by transforming preaustinoid A4 into isoaustinone which is in turn hydroxylated by the P450 monooxygenase ausI to form austinolide. The cytochrome P450 monooxygenase ausG then modifies austinolide to austinol. Austinol is further acetylated to austin by the O-acetyltransferase ausP, which spontaneously changes to dehydroaustin. The cytochrome P450 monooxygenase then converts dehydroaustin is into 7-dehydrodehydroaustin. The hydroxylation catalyzed by ausR permits the second O-acetyltransferase ausQ to add an additional acetyl group to the molecule, leading to the formation of acetoxydehydroaustin. Due to genetic rearrangements of the clusters and the subsequent loss of some enzymes, the end product of the Penicillium brasilianum austinoid biosynthesis clusters is acetoxydehydroaustin. The chain is Austinoid biosynthesis clusters protein H from Penicillium brasilianum.